An 80-amino-acid chain; its full sequence is MIRSIFLGLIRFYQIVLSPLKGPRCRFLPTCSQYAYEAIERYGIWRGLFLGGKRLLRCHPFHAGGYDPVPRPSANNHPSR.

It belongs to the UPF0161 family.

The protein localises to the cell inner membrane. Could be involved in insertion of integral membrane proteins into the membrane. This chain is Putative membrane protein insertion efficiency factor, found in Syntrophobacter fumaroxidans (strain DSM 10017 / MPOB).